Consider the following 275-residue polypeptide: C-type lectin domain family 12 member B (275 aa).

At 1 to 41 the chain is on the cytoplasmic side; that stretch reads MSDEVTYATLMLQDSARVRGNQDGNNLRKEGHPAQSSLWRG. Residues 5 to 10 carry the ITIM motif motif; sequence VTYATL. Residue Tyr-7 is modified to Phosphotyrosine. Residues 42 to 64 form a helical; Signal-anchor for type II membrane protein membrane-spanning segment; sequence AALSLMTLCLVLVTGLVTLATMF. The Extracellular portion of the chain corresponds to 65–275; the sequence is LQVSNDINSD…ASLVKTEDLD (211 aa). 3 N-linked (GlcNAc...) asparagine glycosylation sites follow: Asn-91, Asn-175, and Asn-236. A C-type lectin domain is found at 149–263; it reads YGNSCYYFSI…CSAEIPWICE (115 aa). Intrachain disulfides connect Cys-171-Cys-262 and Cys-241-Cys-254.

As to quaternary structure, homodimer. Interacts (via ITIM motif) with PTPN6. Interacts (via ITIM motif) with PTPN11; this interaction triggers dephosphorylation and activation of PTPN11.

It localises to the cell membrane. In terms of biological role, inhibitory receptor postulated to negatively regulate immune and non-immune functions. Upon phosphorylation, recruits SH2 domain-containing PTPN6 and PTPN11 phosphatases to its ITIM motif and antagonizes activation signals. Although it inhibits KLRK1/NKG2D-mediated signaling, it does not bind known ligands of KLRK1/NKG2D and therefore is not its inhibitory counterpart. May limit activation of myeloid cell subsets in response to infection or tissue inflammation. May protect target cells against natural killer cell-mediated lysis. May negatively regulate cell cycle and differentiation of melanocytes via inactivation of STAT3. In Mus musculus (Mouse), this protein is C-type lectin domain family 12 member B (Clec12b).